Reading from the N-terminus, the 920-residue chain is Translation initiation factor IF-2 (920 aa).

Positions 33–305 are disordered; it reads KSASSTVEAP…RGRKSKRAKR (273 aa). Positions 53–86 are enriched in low complexity; it reads SKSAPAPAKSAGNGATAAPATSATPATAAAAAAP. Composition is skewed to pro residues over residues 87 to 159, 179 to 193, and 201 to 212; these read APAP…PAPR, PRPQ…PGTP, and NMPPRPAGPRPG. Residues 225–291 are compositionally biased toward gly residues; sequence PGGRGPGGGG…GAAGAFGRPG (67 aa). Positions 295–304 are enriched in basic residues; the sequence is KRGRKSKRAK. Positions 416-588 constitute a tr-type G domain; the sequence is IRPPVVTVMG…VLLTADASLD (173 aa). The G1 stretch occupies residues 425 to 432; the sequence is GHVDHGKT. Position 425 to 432 (425 to 432) interacts with GTP; it reads GHVDHGKT. A G2 region spans residues 450–454; sequence GITQH. Residues 475-478 form a G3 region; the sequence is DTPG. GTP is bound by residues 475–479 and 529–532; these read DTPGH and NKID. The tract at residues 529–532 is G4; it reads NKID. The segment at 565–567 is G5; the sequence is SAK.

The protein belongs to the TRAFAC class translation factor GTPase superfamily. Classic translation factor GTPase family. IF-2 subfamily.

Its subcellular location is the cytoplasm. Its function is as follows. One of the essential components for the initiation of protein synthesis. Protects formylmethionyl-tRNA from spontaneous hydrolysis and promotes its binding to the 30S ribosomal subunits. Also involved in the hydrolysis of GTP during the formation of the 70S ribosomal complex. The polypeptide is Translation initiation factor IF-2 (Mycobacterium sp. (strain JLS)).